We begin with the raw amino-acid sequence, 122 residues long: Large ribosomal subunit protein uL18 (122 aa).

Basic residues predominate over residues 1 to 16 (MFKKVDRKASRQKKQM). Residues 1–29 (MFKKVDRKASRQKKQMSIRNKISGTPERP) form a disordered region.

This sequence belongs to the universal ribosomal protein uL18 family. In terms of assembly, part of the 50S ribosomal subunit; part of the 5S rRNA/L5/L18/L25 subcomplex. Contacts the 5S and 23S rRNAs.

This is one of the proteins that bind and probably mediate the attachment of the 5S RNA into the large ribosomal subunit, where it forms part of the central protuberance. The polypeptide is Large ribosomal subunit protein uL18 (Fusobacterium nucleatum subsp. nucleatum (strain ATCC 25586 / DSM 15643 / BCRC 10681 / CIP 101130 / JCM 8532 / KCTC 2640 / LMG 13131 / VPI 4355)).